A 394-amino-acid polypeptide reads, in one-letter code: 4-O-methyl-glucuronoyl methylesterase (394 aa).

The N-terminal stretch at 1-18 (MVHLTPALLLASAAFAAA) is a signal peptide. 3 disulfides stabilise this stretch: Cys29–Cys63, Cys210–Cys345, and Cys242–Cys317. Positions 209–214 (GCSRNG) match the GXSYXG catalytic site motif motif. Ser211 functions as the Nucleophile in the catalytic mechanism. Residues Lys215, Gln257, Glu265, and Trp308 each contribute to the substrate site. The active-site Proton donor/acceptor is His344.

Belongs to the carbohydrate esterase 15 (CE15) family.

The protein resides in the secreted. It catalyses the reaction a 4-O-methyl-alpha-D-glucuronosyl ester derivative + H2O = 4-O-methyl-alpha-D-glucuronate derivative + an alcohol + H(+). In terms of biological role, glucuronoyl esterase which may play a significant role in biomass degradation, as it is considered to disconnect hemicellulose from lignin through the hydrolysis of the ester bond between 4-O-methyl-D-glucuronic acid residues of glucuronoxylans and aromatic alcohols of lignin. This is 4-O-methyl-glucuronoyl methylesterase from Neurospora crassa (strain ATCC 24698 / 74-OR23-1A / CBS 708.71 / DSM 1257 / FGSC 987).